The chain runs to 305 residues: MNTLLEISSLTPDDIESIFNITMQYFNNRSQNNKILNGKVVVNLFFESSTRTLSSFEIAEKSLGAHSITLNINTSSINKGESIIDTILNINAMNPDLIIIRSQYSQLVKTISQYVSNCCIINAGDGNHEHPTQALIDYCTIRYLKKNISNLNISICGDILHSRVARSNIRLLSRYGANISLIAPPTLACDLVGVSHIYHNLIDGIRDADVIMLLRLQKERITNCVIPSEEEYSHLYMLNSERLSYAKKDVIIMHPGPTNKGTEISNNVAENKSVILLQVKMGVAVRKAILHYLLYGNKCNTSNEI.

Positions 51 and 52 each coordinate carbamoyl phosphate. K79 provides a ligand contact to L-aspartate. Residues R101, H130, and Q133 each contribute to the carbamoyl phosphate site. 2 residues coordinate L-aspartate: R163 and R215. Residues G256 and P257 each coordinate carbamoyl phosphate.

The protein belongs to the aspartate/ornithine carbamoyltransferase superfamily. ATCase family. Heterododecamer (2C3:3R2) of six catalytic PyrB chains organized as two trimers (C3), and six regulatory PyrI chains organized as three dimers (R2).

The catalysed reaction is carbamoyl phosphate + L-aspartate = N-carbamoyl-L-aspartate + phosphate + H(+). It participates in pyrimidine metabolism; UMP biosynthesis via de novo pathway; (S)-dihydroorotate from bicarbonate: step 2/3. Its function is as follows. Catalyzes the condensation of carbamoyl phosphate and aspartate to form carbamoyl aspartate and inorganic phosphate, the committed step in the de novo pyrimidine nucleotide biosynthesis pathway. The chain is Aspartate carbamoyltransferase catalytic subunit from Ehrlichia canis (strain Jake).